The chain runs to 368 residues: Flagellar P-ring protein 1 (368 aa).

The signal sequence occupies residues 1-24 (MIFKQIRRLIAAALLAALSLPAAA).

Belongs to the FlgI family. As to quaternary structure, the basal body constitutes a major portion of the flagellar organelle and consists of four rings (L,P,S, and M) mounted on a central rod.

It is found in the periplasm. It localises to the bacterial flagellum basal body. Functionally, assembles around the rod to form the L-ring and probably protects the motor/basal body from shearing forces during rotation. The sequence is that of Flagellar P-ring protein 1 from Chromobacterium violaceum (strain ATCC 12472 / DSM 30191 / JCM 1249 / CCUG 213 / NBRC 12614 / NCIMB 9131 / NCTC 9757 / MK).